A 964-amino-acid chain; its full sequence is DNA polymerase (964 aa).

This sequence belongs to the DNA polymerase type-B family.

The enzyme catalyses DNA(n) + a 2'-deoxyribonucleoside 5'-triphosphate = DNA(n+1) + diphosphate. Catalyzes DNA synthesis. In Choristoneura biennis entomopoxvirus (CbEPV), this protein is DNA polymerase (POL).